A 295-amino-acid polypeptide reads, in one-letter code: Aquaporin-9 (295 aa).

Residues 1-24 are Cytoplasmic-facing; it reads MPSEKDRAKKNLVQRLALKSCLAK. The chain crosses the membrane as a helical span at residues 25 to 43; that stretch reads ETLSEFLGTFIMIVLGCGS. Topologically, residues 44-57 are extracellular; sequence IAQAVLSREKAGGI. Residues 58 to 77 traverse the membrane as a helical segment; sequence ITINIGFATAVVMALYATFG. Residues 78–79 lie on the Cytoplasmic side of the membrane; sequence VS. Positions 80–92 form an intramembrane region, discontinuously helical; it reads GGHINPAVSFAMC. The NPA 1 signature appears at 84 to 86; that stretch reads NPA. Residues 93–98 lie on the Cytoplasmic side of the membrane; sequence TFGRME. The helical transmembrane segment at 99-123 threads the bilayer; sequence WFKFPFYVGAQLLGAFVGAATVFGI. Residues 124 to 160 are Extracellular-facing; sequence YYDGLMAFADGKLLITGENGTAFIFATYPKPFVSVPG. The helical transmembrane segment at 161-178 threads the bilayer; it reads AFVDQVVSTMFLLLIVFA. At 179-190 the chain is on the cytoplasmic side; it reads IFDSRNLGVPRG. Residues 191 to 207 traverse the membrane as a helical segment; that stretch reads LEPIVIGLLIIVISCSL. Residues 208–210 are Extracellular-facing; the sequence is GLN. The segment at residues 211–225 is an intramembrane region (discontinuously helical); it reads SGCAMNPARDLSPRL. Positions 216-218 match the NPA 2 motif; sequence NPA. Over 226 to 243 the chain is Extracellular; that stretch reads FTALAGWGFEVFTFGNNF. A helical transmembrane segment spans residues 244–264; that stretch reads WWIPVVGPMIGAVLGGLIYVL. Residues 265-295 are Cytoplasmic-facing; sequence FIQMHHSNPDPEVKAEPAENNLEKHELSVIM.

This sequence belongs to the MIP/aquaporin (TC 1.A.8) family. Homotetramer; each monomer provides an independent glycerol/water pore.

The protein resides in the cell membrane. The protein localises to the basolateral cell membrane. It catalyses the reaction glycerol(in) = glycerol(out). The catalysed reaction is H2O(in) = H2O(out). The enzyme catalyses urea(in) = urea(out). It carries out the reaction (S)-lactate(in) = (S)-lactate(out). It catalyses the reaction NH4(+)(in) = NH4(+)(out). The catalysed reaction is uracil(in) = uracil(out). The enzyme catalyses adenine(out) = adenine(in). It carries out the reaction 3-hydroxybutanoate(in) = 3-hydroxybutanoate(out). It catalyses the reaction D-sorbitol(in) = D-sorbitol(out). The catalysed reaction is D-mannitol(in) = D-mannitol(out). The enzyme catalyses H2O2(out) = H2O2(in). It carries out the reaction arsenite(in) = arsenite(out). It catalyses the reaction selenite(in) = selenite(out). Functionally, aquaglyceroporins form homotetrameric transmembrane channels, with each monomer independently mediating glycerol and water transport across the plasma membrane along their osmotic gradient. AQP9 is the primary route for glycerol uptake in hepatocytes, supporting hepatic gluconeogenesis. It exhibits broad specificity and may transport various small, non-charged solutes, including carbamides, polyols, purines, and pyrimidines. AQP9 may also facilitate hepatic urea extrusion. Due to its permeability to lactate, AQP9 might participate in the astrocyte-to-neuron lactate shuttle, supplying neurons with energy. Additionally, AQP9 is permeable to arsenite, contributing to arsenic excretion by the liver and providing partial protection against arsenic toxicity. It is also permeable to H2O2 in vivo. Could also be permeable to ammonium. The sequence is that of Aquaporin-9 from Mus musculus (Mouse).